We begin with the raw amino-acid sequence, 541 residues long: Chaperonin GroEL 2 (541 aa).

ATP-binding positions include 29–32 (TLGP), 86–90 (DGTTT), glycine 413, 476–478 (NAA), and aspartate 492.

Belongs to the chaperonin (HSP60) family. As to quaternary structure, forms a cylinder of 14 subunits composed of two heptameric rings stacked back-to-back. Interacts with the co-chaperonin GroES.

The protein resides in the secreted. Its subcellular location is the capsule. It is found in the cell surface. The protein localises to the cell wall. It carries out the reaction ATP + H2O + a folded polypeptide = ADP + phosphate + an unfolded polypeptide.. Its function is as follows. Together with its co-chaperonin GroES, plays an essential role in assisting protein folding. The GroEL-GroES system forms a nano-cage that allows encapsulation of the non-native substrate proteins and provides a physical environment optimized to promote and accelerate protein folding. In Mycolicibacterium gilvum (strain PYR-GCK) (Mycobacterium gilvum (strain PYR-GCK)), this protein is Chaperonin GroEL 2.